A 911-amino-acid chain; its full sequence is DNA ligase 4 (911 aa).

Glu271, Thr272, Lys273, Leu274, Arg278, Glu331, Lys345, Phe367, Glu427, Lys432, Lys449, and Lys451 together coordinate ATP. Catalysis depends on Lys273, which acts as the N6-AMP-lysine intermediate. Glu331 is a binding site for Mg(2+). Residue Glu427 participates in Mg(2+) binding. Residues 610 to 620 (LASKHFYVGGD) are required for catalytic activity. BRCT domains lie at 654 to 743 (KISN…PHFM) and 808 to 911 (SPLS…QYLI).

This sequence belongs to the ATP-dependent DNA ligase family. In terms of assembly, interacts with XRCC4; the LIG4-XRCC4 subcomplex has a 1:2 stoichiometry and XRCC4 is required for LIG4 stability. Component of the core long-range non-homologous end joining (NHEJ) complex (also named DNA-PK complex) composed of PRKDC, LIG4, XRCC4, XRCC6/Ku70, XRCC5/Ku86 and NHEJ1/XLF. Additional component of the NHEJ complex includes PAXX. Following autophosphorylation, PRKDC dissociates from DNA, leading to formation of the short-range NHEJ complex, composed of LIG4, XRCC4, XRCC6/Ku70, XRCC5/Ku86 and NHEJ1/XLF. Interacts with DCLRE1C; the interaction is direct. Interacts with APLF. The cofactor is Mg(2+).

Its subcellular location is the nucleus. It catalyses the reaction ATP + (deoxyribonucleotide)n-3'-hydroxyl + 5'-phospho-(deoxyribonucleotide)m = (deoxyribonucleotide)n+m + AMP + diphosphate.. Its function is as follows. DNA ligase involved in DNA non-homologous end joining (NHEJ); required for double-strand break (DSB) repair and V(D)J recombination. Catalyzes the NHEJ ligation step of the broken DNA during DSB repair by resealing the DNA breaks after the gap filling is completed. Joins single-strand breaks in a double-stranded polydeoxynucleotide in an ATP-dependent reaction. LIG4 is mechanistically flexible: it can ligate nicks as well as compatible DNA overhangs alone, while in the presence of XRCC4, it can ligate ends with 2-nucleotides (nt) microhomology and 1-nt gaps. Forms a subcomplex with XRCC4; the LIG4-XRCC4 subcomplex is responsible for the NHEJ ligation step and XRCC4 enhances the joining activity of LIG4. Binding of the LIG4-XRCC4 complex to DNA ends is dependent on the assembly of the DNA-dependent protein kinase complex DNA-PK to these DNA ends. LIG4 regulates nuclear localization of XRCC4. In Pongo abelii (Sumatran orangutan), this protein is DNA ligase 4.